Consider the following 960-residue polypeptide: MLMLHVKRNTCEHTFKCPPPACYSPSSPVQILEDPSYFFPDFQLYPGRHEASLTVEANSSIREKVVEDPLCNFHPPNFPRIPEVEMRGSEDAAAGTVLQRLIQEQLRYGTPTENMNLLAIQHQATGSAGPAHPTNFSSTENLAQEDPQMVYQSARQEPQGQEHQVDNTVMEKQVRSAQPQQNNEELPTYEEAKAQSQFFRGQQPPPPPPQQQPGAVGHSYYMAGGASQKARTEGRPTVSRANSGQAHKDEALKELKQGHVRSLSERIMQLSLERNGAKQHLPGPGNGKAFKAGGGPSPAQPAAKMLDPRGPPPEYPFKTKQMVSPVSKTQEHGLFYSDQHPGLLHEMVKPYPAPQPARTEVAVLRYQPPPEYGVTSRPCQLPFPSTAQQHSPVSSQNSSVSGPLHSVPLPLAPPMALGAAPPPPAASPSQQLGPDAFAIVERAQQMVEILTEENRVLHQELQGYYDNADKLHKFEKELQRISEAYESLVKSTTKRESLDKAMRNKLEGEIRRLHDFNRDLRDRLETANRQLSSREYDGHEDRAAEGLYASQNKEFLKEKEKLEMELAAVRTASEDHRRHIEILDQALSNAQARVIKLEEELREKQAYVEKVEKLQQALTQLQSACEKREQMERRLRTWLERELDALRTQQKHGNSQPASLPEYNAPALMELVREKEERILALEADMTKWEQKYVEESAIRHFAMSAAATAAAERDTTIVNHSRNGSYGESSLEAHIWQEEEEVVQATRRCQDMEYTIKNLHAKIIEKDAMIKVLQQRSRKDAGKTDSSSLRPARSVPSIAAATGTHSRQTSLTSSQLAEERKEEKTWKGSIATGLLLGKEHNDHASTPLLPTPSAATLSPPTPGTSASSAHAKTGSKDSSTQTDKSAELFWPGVASLPTRSRLSGTPSNSPVLKHPAAKGTAEKLENSPGHGKSPDHKGRVSNLLHKPEFPDGEMMEVLI.

The tract at residues 196–248 is disordered; the sequence is SQFFRGQQPPPPPPQQQPGAVGHSYYMAGGASQKARTEGRPTVSRANSGQAHK. Phosphoserine occurs at positions 243, 271, and 297. The stretch at 261 to 281 forms a coiled coil; that stretch reads RSLSERIMQLSLERNGAKQHL. 3 disordered regions span residues 277–317, 381–407, and 413–432; these read AKQH…EYPF, LPFP…LHSV, and PPMA…SQQL. The span at 388–401 shows a compositional bias: low complexity; that stretch reads QQHSPVSSQNSSVS. 2 coiled-coil regions span residues 440-641 and 667-697; these read VERA…WLER and ALME…VEES. Position 722 is a phosphoserine (Ser722). A coiled-coil region spans residues 731 to 761; it reads SLEAHIWQEEEEVVQATRRCQDMEYTIKNLH. Positions 775 to 826 are disordered; sequence QQRSRKDAGKTDSSSLRPARSVPSIAAATGTHSRQTSLTSSQLAEERKEEKT. Ser795, Ser807, and Ser830 each carry phosphoserine. The segment covering 804-817 has biased composition (polar residues); it reads GTHSRQTSLTSSQL. A disordered region spans residues 842 to 952; it reads NDHASTPLLP…NLLHKPEFPD (111 aa). Over residues 845 to 870 the composition is skewed to low complexity; sequence ASTPLLPTPSAATLSPPTPGTSASSA. Positions 898 to 911 are enriched in polar residues; sequence PTRSRLSGTPSNSP. Ser904 carries the phosphoserine modification. A Phosphothreonine modification is found at Thr906. Residue Ser910 is modified to Phosphoserine. The PDZ-binding signature appears at 957–960; sequence EVLI.

Belongs to the angiomotin family. In terms of processing, polyubiquitinated by NEDD4, leading to proteasomal degradation.

The protein resides in the cell junction. Its subcellular location is the tight junction. In terms of biological role, inhibits the Wnt/beta-catenin signaling pathway, probably by recruiting CTNNB1 to recycling endosomes and hence preventing its translocation to the nucleus. In Bos taurus (Bovine), this protein is Angiomotin-like protein 1 (AMOTL1).